The chain runs to 424 residues: Cyclin-dependent kinase D-1 (424 aa).

Residues Tyr19–Phe299 enclose the Protein kinase domain. Residues Leu25–Val33 and Lys48 contribute to the ATP site. Thr29 is modified (phosphothreonine). Residue Tyr30 is modified to Phosphotyrosine. The Proton acceptor role is filled by Asp141. Ser168 carries the post-translational modification Phosphoserine. Residue Thr174 is modified to Phosphothreonine. 2 disordered regions span residues Pro303–Leu337 and Ala359–Glu424. A compositionally biased stretch (basic and acidic residues) spans Ala359–Asp374.

The protein belongs to the protein kinase superfamily. CMGC Ser/Thr protein kinase family. CDC2/CDKX subfamily. As to quaternary structure, interacts with CYCH1-1. In terms of tissue distribution, expressed in actively dividing cells of roots, leaves and shoots. Expressed in the intercalary meristem and the elongation zone of internodes.

It is found in the nucleus. The enzyme catalyses L-seryl-[protein] + ATP = O-phospho-L-seryl-[protein] + ADP + H(+). The catalysed reaction is L-threonyl-[protein] + ATP = O-phospho-L-threonyl-[protein] + ADP + H(+). It catalyses the reaction [DNA-directed RNA polymerase] + ATP = phospho-[DNA-directed RNA polymerase] + ADP + H(+). Its function is as follows. CDK-activating kinase that may control G1/S phase progression. May control the rate of cell differentiation to accomplish proper development of organs, or in response to a changing environment. Forms a complex with cyclin CYCH1-1 that phosphorylates CDKA-1 and the C-terminal domain (CTD) of the large subunit of RNA polymerase II. The sequence is that of Cyclin-dependent kinase D-1 (CDKD-1) from Oryza sativa subsp. japonica (Rice).